We begin with the raw amino-acid sequence, 266 residues long: ATP synthase subunit a (266 aa).

The next 7 membrane-spanning stretches (helical) occupy residues 41 to 61 (IDTL…FWLA), 98 to 118 (VIAP…LMDL), 119 to 139 (VPID…WKIL), 152 to 172 (LSVL…GGWL), 178 to 198 (HPLG…EFIA), 216 to 236 (LVFI…GTPW), and 237 to 257 (AIFH…LTVV).

The protein belongs to the ATPase A chain family. In terms of assembly, F-type ATPases have 2 components, CF(1) - the catalytic core - and CF(0) - the membrane proton channel. CF(1) has five subunits: alpha(3), beta(3), gamma(1), delta(1), epsilon(1). CF(0) has three main subunits: a(1), b(2) and c(9-12). The alpha and beta chains form an alternating ring which encloses part of the gamma chain. CF(1) is attached to CF(0) by a central stalk formed by the gamma and epsilon chains, while a peripheral stalk is formed by the delta and b chains.

The protein localises to the cell inner membrane. Its function is as follows. Key component of the proton channel; it plays a direct role in the translocation of protons across the membrane. The sequence is that of ATP synthase subunit a from Halorhodospira halophila (strain DSM 244 / SL1) (Ectothiorhodospira halophila (strain DSM 244 / SL1)).